The chain runs to 216 residues: MRVILLGAPGAGKGTQAKFITEKFGIPQISTGDMLRAAVKAGTPLGLELKKVMDAGQLVSDELIISLVKERIAQPDCANGCLFDGFPRTIPQAEAMVAAGVDIDAVVEIAVDDEEIVGRMAGRRVHLASGRTYHIQYNPPKVEGKDDVTGEDLIQRDDDKEETVRHRLSVYHTQTKPLVDFYQKLSAANAGKPKYSHIEGVGSVDAITAKVLAALS.

10 to 15 contacts ATP; sequence GAGKGT. Residues 30-59 are NMP; the sequence is STGDMLRAAVKAGTPLGLELKKVMDAGQLV. AMP contacts are provided by residues threonine 31, arginine 36, 57–59, 85–88, and glutamine 92; these read QLV and GFPR. The interval 122–159 is LID; that stretch reads GRRVHLASGRTYHIQYNPPKVEGKDDVTGEDLIQRDDD. ATP-binding positions include arginine 123 and 132 to 133; that span reads TY. AMP is bound by residues arginine 156 and arginine 167. Glycine 202 contributes to the ATP binding site.

This sequence belongs to the adenylate kinase family. As to quaternary structure, monomer.

It is found in the cytoplasm. It catalyses the reaction AMP + ATP = 2 ADP. Its pathway is purine metabolism; AMP biosynthesis via salvage pathway; AMP from ADP: step 1/1. In terms of biological role, catalyzes the reversible transfer of the terminal phosphate group between ATP and AMP. Plays an important role in cellular energy homeostasis and in adenine nucleotide metabolism. This Pseudomonas putida (strain GB-1) protein is Adenylate kinase.